The sequence spans 402 residues: Nicotinate phosphoribosyltransferase (402 aa).

H224 bears the Phosphohistidine; by autocatalysis mark.

Belongs to the NAPRTase family. Transiently phosphorylated on a His residue during the reaction cycle. Phosphorylation strongly increases the affinity for substrates and increases the rate of nicotinate D-ribonucleotide production. Dephosphorylation regenerates the low-affinity form of the enzyme, leading to product release.

It catalyses the reaction nicotinate + 5-phospho-alpha-D-ribose 1-diphosphate + ATP + H2O = nicotinate beta-D-ribonucleotide + ADP + phosphate + diphosphate. It participates in cofactor biosynthesis; NAD(+) biosynthesis; nicotinate D-ribonucleotide from nicotinate: step 1/1. In terms of biological role, catalyzes the synthesis of beta-nicotinate D-ribonucleotide from nicotinate and 5-phospho-D-ribose 1-phosphate at the expense of ATP. The polypeptide is Nicotinate phosphoribosyltransferase (Neisseria meningitidis serogroup A / serotype 4A (strain DSM 15465 / Z2491)).